The sequence spans 913 residues: Cadherin-4 (913 aa).

The signal sequence occupies residues 1 to 19 (MRTGSRLLLVLLVWGSAAA). Residues 20–166 (LNGDLTVRPT…SAKGLRRQKR (147 aa)) constitute a propeptide that is removed on maturation. Cadherin domains follow at residues 167–274 (DWVI…RPEF), 275–389 (INQV…PPEF), 390–504 (TTST…APYF), 505–610 (PTNH…DNAP), and 611–721 (ELLP…TIGA). Residues 167–731 (DWVIPPINVP…VAAAGLGTGA (565 aa)) are Extracellular-facing. Asn280, Asn409, Asn554, Asn629, Asn658, and Asn699 each carry an N-linked (GlcNAc...) asparagine glycan. The chain crosses the membrane as a helical span at residues 732 to 753 (IIAILICIIILLTMVLLFVVWM). Over 754–913 (KRREKERHTK…ADMYGGGEED (160 aa)) the chain is Cytoplasmic.

As to expression, embryonic brain and neuronal retina.

It is found in the cell membrane. Cadherins are calcium-dependent cell adhesion proteins. They preferentially interact with themselves in a homophilic manner in connecting cells; cadherins may thus contribute to the sorting of heterogeneous cell types. May play an important role in retinal development. This is Cadherin-4 (CDH4) from Gallus gallus (Chicken).